A 161-amino-acid polypeptide reads, in one-letter code: Phosphopantetheine adenylyltransferase (161 aa).

Thr10 is a substrate binding site. Residues 10-11 and His18 contribute to the ATP site; that span reads TF. Positions 42, 74, and 88 each coordinate substrate. ATP-binding positions include 89–91, Glu99, and 123–129; these read GVR and YIHISST.

This sequence belongs to the bacterial CoaD family. As to quaternary structure, homohexamer. Mg(2+) serves as cofactor.

The protein resides in the cytoplasm. It carries out the reaction (R)-4'-phosphopantetheine + ATP + H(+) = 3'-dephospho-CoA + diphosphate. It functions in the pathway cofactor biosynthesis; coenzyme A biosynthesis; CoA from (R)-pantothenate: step 4/5. In terms of biological role, reversibly transfers an adenylyl group from ATP to 4'-phosphopantetheine, yielding dephospho-CoA (dPCoA) and pyrophosphate. The polypeptide is Phosphopantetheine adenylyltransferase (Aquifex aeolicus (strain VF5)).